We begin with the raw amino-acid sequence, 312 residues long: Uracil-DNA glycosylase (312 aa).

Residues 1 to 11 (MSSACDHETEA) are compositionally biased toward basic and acidic residues. Residues 1-61 (MSSACDHETE…PPKRRRPCGL (61 aa)) are disordered. A compositionally biased stretch (polar residues) spans 22–33 (EENGSNSSTPTS). The active-site Proton acceptor is Asp-155.

The protein belongs to the uracil-DNA glycosylase (UDG) superfamily. UNG family.

Its subcellular location is the host nucleus. It catalyses the reaction Hydrolyzes single-stranded DNA or mismatched double-stranded DNA and polynucleotides, releasing free uracil.. Functionally, excises uracil residues from the DNA which can arise as a result of misincorporation of dUMP residues by DNA polymerase or deamination of cytosines. Therefore may reduce deleterious uracil incorporation into the viral genome, particularly in terminally differentiated cells which lack DNA repair enzymes. The protein is Uracil-DNA glycosylase (61) of Equine herpesvirus 1 (strain V592) (EHV-1).